We begin with the raw amino-acid sequence, 610 residues long: Pyruvate decarboxylase 1 (610 aa).

Residues Asp72 and His159 each coordinate substrate. Residues 437–519 (DSWFNCQKLR…FLINNGGYTI (83 aa)) are thiamine pyrophosphate binding. Mg(2+) is bound by residues Asp487, Asn514, and Gly516. Glu520 provides a ligand contact to substrate.

It belongs to the TPP enzyme family. As to quaternary structure, homotetramer. Requires a metal cation as cofactor. Thiamine diphosphate is required as a cofactor.

The catalysed reaction is a 2-oxocarboxylate + H(+) = an aldehyde + CO2. In Zea mays (Maize), this protein is Pyruvate decarboxylase 1 (PDC1).